We begin with the raw amino-acid sequence, 237 residues long: Large ribosomal subunit protein uL1 (237 aa).

It belongs to the universal ribosomal protein uL1 family. In terms of assembly, part of the 50S ribosomal subunit.

In terms of biological role, binds directly to 23S rRNA. The L1 stalk is quite mobile in the ribosome, and is involved in E site tRNA release. Its function is as follows. Protein L1 is also a translational repressor protein, it controls the translation of the L11 operon by binding to its mRNA. In Dehalococcoides mccartyi (strain CBDB1), this protein is Large ribosomal subunit protein uL1.